Consider the following 384-residue polypeptide: Prostaglandin E synthase 2 (384 aa).

At 1–56 (MAQAARLSWVLVSSRCALTEGLLTRPWQPLSAQSRAGFTRVAAGSRGAAVRKGSPR) the chain is on the lumenal side. A helical transmembrane segment spans residues 57-73 (LLGAAALALGGALGLYH). The Cytoplasmic segment spans residues 74 to 384 (TVRWHQRSQD…VHHVNPSCKD (311 aa)). Positions 89–192 (SAAQLPLSNS…EVITYYPPMK (104 aa)) constitute a Glutaredoxin domain. Glutathione-binding positions include valine 147 and 163-164 (DS). The 115-residue stretch at 262-376 (YIVREGKFGA…RAIEEAPSVH (115 aa)) folds into the GST C-terminal domain.

Belongs to the GST superfamily. In terms of assembly, homodimer. Interacts with EXOSC10. May interact with CEBPB. Post-translationally, synthesized as a Golgi membrane-associated protein, and the proteolytic removal of the N-terminal hydrophobic domain leads to the formation of a mature cytosolic enzyme. Widely expressed. Expressed in brain, heart, liver, colon and lung.

The protein resides in the golgi apparatus membrane. It is found in the nucleus. It localises to the cytoplasm. The enzyme catalyses prostaglandin H2 = prostaglandin E2. It carries out the reaction prostaglandin H2 = (12S)-hydroxy-(5Z,8E,10E)-heptadecatrienoate + malonaldehyde. The protein operates within lipid metabolism; prostaglandin biosynthesis. With respect to regulation, isomerase activity is increased by sulfhydril compounds. Dithiothreitol (DTT) is most effective, followed by glutathione (GSH) and 2-mercaptoethanol. Functionally, isomerase that catalyzes the conversion of PGH2 into the more stable prostaglandin E2 (PGE2) (in vitro). The biological function and the GSH-dependent property of PTGES2 is still under debate. In vivo, PTGES2 could form a complex with GSH and heme and would not participate in PGE2 synthesis but would catalyze the degradation of prostaglandin E2 H2 (PGH2) to 12(S)-hydroxy-5(Z),8(E),10(E)-heptadecatrienoic acid (HHT) and malondialdehyde (MDA). May also have transactivation activity toward IFN-gamma (IFNG), possibly via an interaction with CEBPB; however, the relevance of transcription activation activity remains unclear. The protein is Prostaglandin E synthase 2 (Ptges2) of Mus musculus (Mouse).